Reading from the N-terminus, the 255-residue chain is Type III pantothenate kinase (255 aa).

An ATP-binding site is contributed by 6–13 (DVGNTNIV). Residues Y100 and 107–110 (GADR) each bind substrate. The Proton acceptor role is filled by D109. D129 is a binding site for K(+). Residue T132 coordinates ATP. T184 contacts substrate.

Belongs to the type III pantothenate kinase family. In terms of assembly, homodimer. NH4(+) serves as cofactor. The cofactor is K(+).

It localises to the cytoplasm. It catalyses the reaction (R)-pantothenate + ATP = (R)-4'-phosphopantothenate + ADP + H(+). It functions in the pathway cofactor biosynthesis; coenzyme A biosynthesis; CoA from (R)-pantothenate: step 1/5. Catalyzes the phosphorylation of pantothenate (Pan), the first step in CoA biosynthesis. The polypeptide is Type III pantothenate kinase (Caldanaerobacter subterraneus subsp. tengcongensis (strain DSM 15242 / JCM 11007 / NBRC 100824 / MB4) (Thermoanaerobacter tengcongensis)).